Reading from the N-terminus, the 276-residue chain is MKGQILREMKVLKAIDPAFEVQRRVAFIKSKLKQSSTTSLVLGISGGVDSSVGGRLCQLAVDELNSESQSSSYQFIAVRLPYDVQKDEDEAQLACQFIQPSKQVTVNVKLGVDGVHSETLAAIEAAGIALPEHDKIDFVKGNVKARMRMVAQYDIAGLVGGLVVGTDHSAENITGFYTKWGDGACDLAPLFGLNKRQVRQLADYLGAPEVLVSKAPTADLEEEHPQQEDEEALGLTYEQIDDFLEGKVVSNFVNDKLISMYLATQHKREPIPTIYD.

43–50 provides a ligand contact to ATP; sequence GISGGVDS. Residue Asp49 coordinates Mg(2+). Arg146 lines the deamido-NAD(+) pocket. Thr166 is an ATP binding site. Mg(2+) is bound at residue Glu171. Positions 179 and 186 each coordinate deamido-NAD(+). ATP contacts are provided by Lys195 and Thr217. Position 266 to 267 (266 to 267) interacts with deamido-NAD(+); the sequence is HK.

Belongs to the NAD synthetase family. In terms of assembly, homodimer.

The enzyme catalyses deamido-NAD(+) + NH4(+) + ATP = AMP + diphosphate + NAD(+) + H(+). It functions in the pathway cofactor biosynthesis; NAD(+) biosynthesis; NAD(+) from deamido-NAD(+) (ammonia route): step 1/1. In terms of biological role, catalyzes the ATP-dependent amidation of deamido-NAD to form NAD. Uses ammonia as a nitrogen source. The polypeptide is NH(3)-dependent NAD(+) synthetase (Shewanella halifaxensis (strain HAW-EB4)).